Reading from the N-terminus, the 650-residue chain is Chaperone protein DnaK (650 aa).

At Thr200 the chain carries Phosphothreonine; by autocatalysis. Over residues 613-634 the composition is skewed to low complexity; sequence QAGAAGAAGAAAAEGAAQGGAQ. The interval 613-637 is disordered; that stretch reads QAGAAGAAGAAAAEGAAQGGAQTAD.

It belongs to the heat shock protein 70 family.

Functionally, acts as a chaperone. This is Chaperone protein DnaK from Burkholderia thailandensis (strain ATCC 700388 / DSM 13276 / CCUG 48851 / CIP 106301 / E264).